We begin with the raw amino-acid sequence, 717 residues long: Polyribonucleotide nucleotidyltransferase (717 aa).

Asp-486 and Asp-492 together coordinate Mg(2+). The region spanning 553-612 (PKIVQLQIDIDKISLVIGSTGKTVKAITDEFEVRVQIEQDGRITLFGTDSLKMQKAKAKI) is the KH domain. Residues 622-715 (GEIYDGIVKK…KFGKIELELV (94 aa)) enclose the S1 motif domain. A disordered region spans residues 659-689 (RYGDMRHSRYGSGRHSRYGRDNRNTFGMNPP). The span at 666–675 (SRYGSGRHSR) shows a compositional bias: basic residues.

Belongs to the polyribonucleotide nucleotidyltransferase family. Mg(2+) serves as cofactor.

It localises to the cytoplasm. The enzyme catalyses RNA(n+1) + phosphate = RNA(n) + a ribonucleoside 5'-diphosphate. In terms of biological role, involved in mRNA degradation. Catalyzes the phosphorolysis of single-stranded polyribonucleotides processively in the 3'- to 5'-direction. This chain is Polyribonucleotide nucleotidyltransferase, found in Borrelia hermsii (strain HS1 / DAH).